The primary structure comprises 257 residues: TLC domain-containing protein 3A (257 aa).

Transmembrane regions (helical) follow at residues M1–W21, L42–C62, V77–C97, F113–A135, L142–L162, G181–W201, and F220–L240. Residues T33–D249 enclose the TLC domain.

In terms of assembly, interacts with GGT7 isoform 3 and SLC3A2. As to expression, highly expressed in pancreas. Detected at intermediate levels in heart, placenta and kidney, and at low levels in brain, liver and skeletal muscle. Not detected in normal lung.

The protein localises to the cell membrane. This Homo sapiens (Human) protein is TLC domain-containing protein 3A.